The primary structure comprises 227 residues: Probable septum site-determining protein MinC (227 aa).

This sequence belongs to the MinC family. As to quaternary structure, interacts with MinD and FtsZ.

Cell division inhibitor that blocks the formation of polar Z ring septums. Rapidly oscillates between the poles of the cell to destabilize FtsZ filaments that have formed before they mature into polar Z rings. Prevents FtsZ polymerization. The protein is Probable septum site-determining protein MinC of Laribacter hongkongensis (strain HLHK9).